We begin with the raw amino-acid sequence, 317 residues long: Nicotianamine synthase (317 aa).

Belongs to the nicotianamine synthase (NAS)-like family. As to quaternary structure, homomultimer. In terms of tissue distribution, leaves and roots.

It catalyses the reaction 3 S-adenosyl-L-methionine = nicotianamine + 3 S-methyl-5'-thioadenosine + 3 H(+). Its function is as follows. Synthesizes nicotianamine, a polyamine that serves as a sensor for the physiological iron status within the plant, and/or might be involved in the transport of iron. The protein is Nicotianamine synthase (CHLN) of Solanum lycopersicum (Tomato).